Consider the following 277-residue polypeptide: Lectin 1 (277 aa).

An N-terminal signal peptide occupies residues 1–30; the sequence is MSFSSSNFYVILSISLTVFILLFNINKVNS. N-linked (GlcNAc...) asparagine glycosylation occurs at asparagine 143. Mn(2+)-binding residues include glutamate 152 and aspartate 154. Residues aspartate 154, asparagine 158, and aspartate 161 each contribute to the Ca(2+) site. The Mn(2+) site is built by aspartate 161 and histidine 167. N-linked (GlcNAc...) asparagine glycosylation is present at asparagine 269.

This sequence belongs to the leguminous lectin family.

Its function is as follows. Lectin that may be involved in a cell recognition process. This Medicago truncatula (Barrel medic) protein is Lectin 1 (LEC1).